The following is a 506-amino-acid chain: Glycine--tRNA ligase (506 aa).

Positions 99 and 189 each coordinate substrate. ATP-binding positions include 221–223, 231–236, 305–306, and 364–367; these read RNE, FRVREF, EL, and GVDR. A substrate-binding site is contributed by 236–240; it reads FEQME. 360–364 is a substrate binding site; the sequence is EPSAG.

This sequence belongs to the class-II aminoacyl-tRNA synthetase family. Homodimer.

Its subcellular location is the cytoplasm. The catalysed reaction is tRNA(Gly) + glycine + ATP = glycyl-tRNA(Gly) + AMP + diphosphate. Its function is as follows. Catalyzes the attachment of glycine to tRNA(Gly). This is Glycine--tRNA ligase from Thermus thermophilus (strain ATCC BAA-163 / DSM 7039 / HB27).